The following is a 696-amino-acid chain: Mitosis initiation protein fs(1)Ya (696 aa).

3 disordered regions span residues 245-285 (NAST…RAWK), 336-379 (EHSS…YSTS), and 457-492 (IKFETPPKSSQQMRSNGEGDETKDQFFTPEPGTPEI). Low complexity-rich tracts occupy residues 270–281 (QQQQQQQQPLQQ) and 361–379 (SESSASEVNSGSSSSYSTS). Residues 448 to 696 (TGAGINKKQI…REPIERMRRQ (249 aa)) are rich in charged AA. Phosphothreonine occurs at positions 478, 484, and 489. Short sequence motifs (nuclear localization signal) lie at residues 512-520 (PKKDKPKEK) and 534-538 (QPRVR). Disordered regions lie at residues 555 to 586 (DVGEPEVVDAEEEDEVFRPTNASTCNDKKLEA) and 603 to 696 (PASL…MRRQ). Residues 557–569 (GEPEVVDAEEEDE) show a composition bias toward acidic residues. 2 stretches are compositionally biased toward basic and acidic residues: residues 607–624 (RGEREKDRDRDRDSDKEN) and 685–696 (RPREPIERMRRQ).

It localises to the nucleus envelope. The protein resides in the nucleus. Its subcellular location is the nucleoplasm. The protein localises to the cytoplasm. Cell cycle-dependent nuclear envelope component required for embryonic mitosis. The protein is Mitosis initiation protein fs(1)Ya (fs(1)Ya) of Drosophila melanogaster (Fruit fly).